The chain runs to 211 residues: Peptide methionine sulfoxide reductase MsrA (211 aa).

The active site involves cysteine 52.

Belongs to the MsrA Met sulfoxide reductase family.

It catalyses the reaction L-methionyl-[protein] + [thioredoxin]-disulfide + H2O = L-methionyl-(S)-S-oxide-[protein] + [thioredoxin]-dithiol. The enzyme catalyses [thioredoxin]-disulfide + L-methionine + H2O = L-methionine (S)-S-oxide + [thioredoxin]-dithiol. In terms of biological role, has an important function as a repair enzyme for proteins that have been inactivated by oxidation. Catalyzes the reversible oxidation-reduction of methionine sulfoxide in proteins to methionine. The sequence is that of Peptide methionine sulfoxide reductase MsrA from Klebsiella pneumoniae (strain 342).